The primary structure comprises 1171 residues: DNA-directed RNA polymerase subunit beta (1171 aa).

This sequence belongs to the RNA polymerase beta chain family. The RNAP catalytic core consists of 2 alpha, 1 beta, 1 beta' and 1 omega subunit. When a sigma factor is associated with the core the holoenzyme is formed, which can initiate transcription.

It carries out the reaction RNA(n) + a ribonucleoside 5'-triphosphate = RNA(n+1) + diphosphate. DNA-dependent RNA polymerase catalyzes the transcription of DNA into RNA using the four ribonucleoside triphosphates as substrates. The polypeptide is DNA-directed RNA polymerase subunit beta (Kineococcus radiotolerans (strain ATCC BAA-149 / DSM 14245 / SRS30216)).